The chain runs to 623 residues: Kelch repeat and BTB domain-containing protein 2 (623 aa).

Positions 31–98 (TDIVLIVEGT…AYTGNLAMND (68 aa)) constitute a BTB domain. Positions 133-229 (CVRLLSFADL…IRIDALSEVT (97 aa)) constitute a BACK domain. Position 300 is a phosphoserine (Ser-300). Kelch repeat units lie at residues 317-380 (DIYI…CCEG), 381-429 (YIYA…VVHD), 431-469 (IYVM…AFGD), 470-529 (KIFY…RAVV), and 535-581 (CVFM…DFRC).

In terms of assembly, component of the BCR(KBTBD2) E3 ubiquitin ligase complex, at least composed of CUL3, KBTBD2 and RBX1. Interacts (via the BTB domain) with CUL3.

Its pathway is protein modification; protein ubiquitination. In terms of biological role, substrate-specific adapter of a BCR (BTB-CUL3-RBX1) E3 ubiquitin ligase complex that acts as a regulator of the insulin signaling pathway, modulating insulin sensitivity by limiting PIK3R1/p85alpha abundance in adipocytes. Targets PIK3R1, the regulatory subunit of phosphatidylinositol 3-kinase (PI3K), for 'Lys-48'-linked polyubiquitination and proteasome-mediated degradation. In Homo sapiens (Human), this protein is Kelch repeat and BTB domain-containing protein 2.